The sequence spans 97 residues: MNITLFCSVFILISLAGLSVSDDVPGNYPMSLYGNKYSCGVLGENEYCRKICKSHGVSYGYCFNSRCWCEYLEDKDVDFWAAHKNHCKNDKLYPPKK.

A signal peptide spans 1–21 (MNITLFCSVFILISLAGLSVS). In terms of domain architecture, LCN-type CS-alpha/beta spans 25–88 (PGNYPMSLYG…FWAAHKNHCK (64 aa)). Cystine bridges form between cysteine 39–cysteine 62, cysteine 48–cysteine 67, and cysteine 52–cysteine 69.

This sequence belongs to the long (3 C-C) scorpion toxin superfamily. As to quaternary structure, monomer (edited version) and heterodimer (non-edited version) of this alpha chain and a beta chain (AC D9U2A2). As to expression, expressed by the venom gland.

The protein resides in the secreted. The heterodimer non-edited LVP1 induces lipolysis in rat adipocytes. Induction of lipolysis by LVP1 appears to be mediated through the beta-2 adrenergic receptor pathway (ADRB2). In terms of biological role, the edited BmKBTx-like, similar to beta-toxins, may modulate voltage-gated sodium channels (Nav) and may block voltage-gated potassium channels (Kv). This is Lipolysis-activating peptide 1-alpha chain from Lychas mucronatus (Chinese swimming scorpion).